Here is a 387-residue protein sequence, read N- to C-terminus: Acetylajmalan esterase (387 aa).

The first 22 residues, 1-22 (MGFARLLHLVFSLLVFAGITNG), serve as a signal peptide directing secretion. The active-site Nucleophile is S36. N-linked (GlcNAc...) asparagine glycans are attached at residues N98, N180, N199, N249, and N296. Active-site residues include D337 and H340.

The protein belongs to the 'GDSL' lipolytic enzyme family.

It carries out the reaction 17-O-acetylajmaline + H2O = ajmaline + acetate + H(+). The catalysed reaction is 17-O-acetylnorajmaline + H2O = norajmaline + acetate + H(+). It participates in alkaloid biosynthesis; ajmaline biosynthesis. Acetylesterase involved in the biosynthesis of ajmaline-type monoterpenoid indole alkaloids (MIAs) natural products, important plant-derived pharmaceuticals used in the therapy of heart disorders. Deacetylates 17-O-acetylajmaline and 17-O-acetylnorajmaline to produce ajmaline and norajmaline, but is inactive toward other acetylated alkaloids. In Rauvolfia serpentina (Serpentine wood), this protein is Acetylajmalan esterase.